A 315-amino-acid polypeptide reads, in one-letter code: Methionyl-tRNA formyltransferase (315 aa).

113–116 is a (6S)-5,6,7,8-tetrahydrofolate binding site; that stretch reads SLLP.

It belongs to the Fmt family.

It carries out the reaction L-methionyl-tRNA(fMet) + (6R)-10-formyltetrahydrofolate = N-formyl-L-methionyl-tRNA(fMet) + (6S)-5,6,7,8-tetrahydrofolate + H(+). Attaches a formyl group to the free amino group of methionyl-tRNA(fMet). The formyl group appears to play a dual role in the initiator identity of N-formylmethionyl-tRNA by promoting its recognition by IF2 and preventing the misappropriation of this tRNA by the elongation apparatus. In Shigella boydii serotype 18 (strain CDC 3083-94 / BS512), this protein is Methionyl-tRNA formyltransferase.